A 199-amino-acid polypeptide reads, in one-letter code: Holliday junction branch migration complex subunit RuvA (199 aa).

Residues 1 to 65 form a domain I region; sequence MIASLRGKLL…DRGQRLFGFG (65 aa). The domain II stretch occupies residues 66–144; sequence SKKDRESFEL…KFEMFLNEGT (79 aa). Positions 145–155 are flexible linker; the sequence is TESSFVDRETD. The domain III stretch occupies residues 155-199; it reads DLATLALIQLGFDEKSATKQVADAKKLNPGLSASDIVKQVITGTR.

It belongs to the RuvA family. In terms of assembly, homotetramer. Forms an RuvA(8)-RuvB(12)-Holliday junction (HJ) complex. HJ DNA is sandwiched between 2 RuvA tetramers; dsDNA enters through RuvA and exits via RuvB. An RuvB hexamer assembles on each DNA strand where it exits the tetramer. Each RuvB hexamer is contacted by two RuvA subunits (via domain III) on 2 adjacent RuvB subunits; this complex drives branch migration. In the full resolvosome a probable DNA-RuvA(4)-RuvB(12)-RuvC(2) complex forms which resolves the HJ.

Its subcellular location is the cytoplasm. The RuvA-RuvB-RuvC complex processes Holliday junction (HJ) DNA during genetic recombination and DNA repair, while the RuvA-RuvB complex plays an important role in the rescue of blocked DNA replication forks via replication fork reversal (RFR). RuvA specifically binds to HJ cruciform DNA, conferring on it an open structure. The RuvB hexamer acts as an ATP-dependent pump, pulling dsDNA into and through the RuvAB complex. HJ branch migration allows RuvC to scan DNA until it finds its consensus sequence, where it cleaves and resolves the cruciform DNA. In Leptospira biflexa serovar Patoc (strain Patoc 1 / Ames), this protein is Holliday junction branch migration complex subunit RuvA.